Reading from the N-terminus, the 216-residue chain is Vesicle-associated membrane protein 7A (216 aa).

Topologically, residues 1–189 are cytoplasmic; that stretch reads MSQTDILYAC…KRKLWWQNKK (189 aa). One can recognise a Longin domain in the interval 6-112; that stretch reads ILYACVSYKG…ATYDPFIRVL (107 aa). The region spanning 126 to 186 is the v-SNARE coiled-coil homology domain; the sequence is KMNLVMDQVS…VALKRKLWWQ (61 aa). A helical; Anchor for type IV membrane protein membrane pass occupies residues 190–210; it reads LAIAIGLVVCILIAVITLALL. The Vesicular portion of the chain corresponds to 211-216; the sequence is KYFKVI.

This sequence belongs to the synaptobrevin family. In terms of assembly, component of the SNARE complex composed of syn7A, syn8A, vamp7A and vti1A.

The protein resides in the cytoplasmic vesicle. It localises to the secretory vesicle membrane. Its subcellular location is the golgi apparatus. The protein localises to the trans-Golgi network membrane. It is found in the late endosome membrane. The protein resides in the lysosome membrane. It localises to the endoplasmic reticulum membrane. Its subcellular location is the phagosome membrane. Involved in the targeting and/or fusion of transport vesicles to their target membrane during transport of proteins from the early endosome to the lysosome. Required for heterotypic fusion of late endosomes with lysosomes and homotypic lysosomal fusion. Required for calcium regulated lysosomal exocytosis. The chain is Vesicle-associated membrane protein 7A from Dictyostelium discoideum (Social amoeba).